Here is a 488-residue protein sequence, read N- to C-terminus: Sucrose 6(F)-phosphate phosphorylase (488 aa).

Sucrose 6(F)-phosphate contacts are provided by residues D49, H87, 195–197 (RLD), E238, 295–296 (HD), 342–345 (DVHQ), and R399. Residue D197 is the Nucleophile of the active site. The active-site Proton donor/acceptor is E238.

This sequence belongs to the glycosyl hydrolase 13 family. Sucrose phosphorylase subfamily. Monomer.

The enzyme catalyses sucrose 6(F)-phosphate + phosphate = beta-D-fructose 6-phosphate + alpha-D-glucose 1-phosphate. Functionally, catalyzes the reversible phosphorolysis of sucrose 6(F)-phosphate into alpha-D-glucose 1-phosphate (Glc1P) and D-fructose 6-phosphate. May be involved in a new pathway for the degradation of sucrose, which could become phosphorylated on its fructose moiety during uptake via a PTS system. To a lesser extent, can also reversibly act on sucrose in vitro. Is also able to catalyze transglycosylation reactions in vitro. The chain is Sucrose 6(F)-phosphate phosphorylase from Thermoanaerobacterium thermosaccharolyticum (strain ATCC 7956 / DSM 571 / NCIMB 9385 / NCA 3814 / NCTC 13789 / WDCM 00135 / 2032) (Clostridium thermosaccharolyticum).